We begin with the raw amino-acid sequence, 382 residues long: 3-isopropylmalate dehydrogenase (382 aa).

91-102 lines the NAD(+) pocket; that stretch reads GPKWGTGSVRPE. 4 residues coordinate substrate: Arg-109, Arg-119, Arg-148, and Asp-240. Mg(2+) contacts are provided by Asp-240, Asp-265, and Asp-269. 304 to 315 contributes to the NAD(+) binding site; sequence GSAPDLTENKVN.

Belongs to the isocitrate and isopropylmalate dehydrogenases family. As to quaternary structure, homodimer. It depends on Mg(2+) as a cofactor. Requires Mn(2+) as cofactor.

It is found in the cytoplasm. The enzyme catalyses (2R,3S)-3-isopropylmalate + NAD(+) = 4-methyl-2-oxopentanoate + CO2 + NADH. Its pathway is amino-acid biosynthesis; L-leucine biosynthesis; L-leucine from 3-methyl-2-oxobutanoate: step 3/4. In terms of biological role, catalyzes the oxidation of 3-carboxy-2-hydroxy-4-methylpentanoate (3-isopropylmalate) to 3-carboxy-4-methyl-2-oxopentanoate. The product decarboxylates to 4-methyl-2 oxopentanoate. This chain is 3-isopropylmalate dehydrogenase (LEU2), found in Debaryomyces hansenii (strain ATCC 36239 / CBS 767 / BCRC 21394 / JCM 1990 / NBRC 0083 / IGC 2968) (Yeast).